The primary structure comprises 332 residues: MTGQPLTMETAAGADAGTGAATHPADGRRPVVVVTGMSGGGLSTALKALEDLGYEAVDNLRLSLLTALVFQAHDRPLAIGIDSRTRDFSADALLQELDALRAHPDLRVRLLFMEATEEVLQRRYTETRRPHPLAVDRPVPDGIALERTLLVPLREAAEVVIDTSQLSIHDVRRLLTGHFRLDGDPSLHVFVTSFAYRHGVPREADLVFDVRFLDNPHWDPALRPLTGLDRPVAEHVGRDPDFPDFFRHLTTLLAPLLPRYAREGKHYLTIAIGCTGGRHRSVFTAHRLAGWLRDQGYKVGEGHRDLDRRHPAPEPAPPWREVASRETPEEHR.

A disordered region spans residues 1 to 27; sequence MTGQPLTMETAAGADAGTGAATHPADG. Positions 10 to 22 are enriched in low complexity; that stretch reads TAAGADAGTGAAT. 36–43 serves as a coordination point for ATP; the sequence is GMSGGGLS. 82-85 contributes to the GTP binding site; that stretch reads DSRT. Basic and acidic residues-rich tracts occupy residues 302-312 and 322-332; these read GHRDLDRRHPA and VASRETPEEHR. Residues 302–332 are disordered; the sequence is GHRDLDRRHPAPEPAPPWREVASRETPEEHR.

It belongs to the RapZ-like family.

Its function is as follows. Displays ATPase and GTPase activities. This chain is Nucleotide-binding protein RC1_2868, found in Rhodospirillum centenum (strain ATCC 51521 / SW).